A 251-amino-acid polypeptide reads, in one-letter code: MVKRDAPWRLMAGTSKVSRSANFSPREGMGPKFNKAAAWVNRPMYRKPRIYRTMRGPDIPKGCEGPCKVQSYEQRHDISHLGKVMCISDVTRGNGITHRVGKRFCVKSVYILGKIWMDENIKLKNHTNSVMFWLVRDRRPYGTPMDFGQVFNMFDNEPSTATIKNDLRDRYQVMHRFYAKVTGGQYASNEQALVRRFWKVNNHVVYNHQEAGKYENHTENALLLYMACTHASNPVYATLKIRIYFYDSITN.

The short motif at 3-20 (KRDAPWRLMAGTSKVSRS) is the Bipartite nuclear localization signal element. The Nuclear localization signal signature appears at 35-49 (KAAAWVNRPMYRKPR). The segment at 63-80 (CEGPCKVQSYEQRHDISH) is a zinc-finger region. The short motif at 96-117 (ITHRVGKRFCVKSVYILGKIWM) is the Nuclear export signal element. A Bipartite nuclear localization signal motif is present at residues 195-242 (RRFWKVNNHVVYNHQEAGKYENHTENALLLYMACTHASNPVYATLKIR).

The protein belongs to the geminiviridae capsid protein family. As to quaternary structure, homomultimer. Binds to single-stranded and double-stranded viral DNA. Interacts (via nuclear localization signals) with host importin alpha-1a.

The protein resides in the virion. It localises to the host nucleus. In terms of biological role, encapsidates the viral DNA into characteristic twinned ('geminate') particles. Binds the genomic viral ssDNA and shuttles it into and out of the cell nucleus. The CP of bipartite geminiviruses is not required for cell-to-cell or systemic movement. The polypeptide is Capsid protein (Squash leaf curl virus (SLCV)).